Reading from the N-terminus, the 487-residue chain is Glutamyl-tRNA(Gln) amidotransferase subunit A (487 aa).

Residues lysine 78 and serine 153 each act as charge relay system in the active site. Serine 177 (acyl-ester intermediate) is an active-site residue.

The protein belongs to the amidase family. GatA subfamily. As to quaternary structure, heterotrimer of A, B and C subunits.

The catalysed reaction is L-glutamyl-tRNA(Gln) + L-glutamine + ATP + H2O = L-glutaminyl-tRNA(Gln) + L-glutamate + ADP + phosphate + H(+). Functionally, allows the formation of correctly charged Gln-tRNA(Gln) through the transamidation of misacylated Glu-tRNA(Gln) in organisms which lack glutaminyl-tRNA synthetase. The reaction takes place in the presence of glutamine and ATP through an activated gamma-phospho-Glu-tRNA(Gln). This Oleidesulfovibrio alaskensis (strain ATCC BAA-1058 / DSM 17464 / G20) (Desulfovibrio alaskensis) protein is Glutamyl-tRNA(Gln) amidotransferase subunit A.